The chain runs to 321 residues: L-Ala-D/L-Glu epimerase (321 aa).

2 residues coordinate substrate: threonine 124 and lysine 149. Lysine 151 serves as the catalytic Proton acceptor; specific for (R)-substrate epimerization. Aspartate 176, glutamate 202, and aspartate 225 together coordinate Mg(2+). The active-site Proton acceptor; specific for (S)-substrate epimerization is lysine 247. Residues cysteine 275, aspartate 297, and aspartate 299 each contribute to the substrate site.

It belongs to the mandelate racemase/muconate lactonizing enzyme family. As to quaternary structure, monomer. Mg(2+) serves as cofactor.

It carries out the reaction L-alanyl-L-glutamate = L-alanyl-D-glutamate. It participates in cell wall biogenesis; peptidoglycan recycling. Catalyzes the epimerization of L-Ala-D-Glu to L-Ala-L-Glu and has a role in the recycling of the murein peptide, of which L-Ala-D-Glu is a component. Is also able to catalyze the reverse reaction and the epimerization of all the L-Ala-X dipeptides, except L-Ala-L-Arg, L-Ala-L-Lys and L-Ala-L-Pro. Is also active with L-Gly-L-Glu, L-Phe-L-Glu, and L-Ser-L-Glu, but not with L-Glu-L-Glu, L-Lys-L-Glu, L-Pro-L-Glu, L-Lys-L-Ala, or D-Ala-D-Ala. In Escherichia coli (strain K12), this protein is L-Ala-D/L-Glu epimerase (ycjG).